Consider the following 245-residue polypeptide: DNA repair protein RecO (245 aa).

The protein belongs to the RecO family.

In terms of biological role, involved in DNA repair and RecF pathway recombination. The sequence is that of DNA repair protein RecO from Pectobacterium atrosepticum (strain SCRI 1043 / ATCC BAA-672) (Erwinia carotovora subsp. atroseptica).